A 507-amino-acid chain; its full sequence is ATP synthase subunit alpha, chloroplastic (507 aa).

170–177 (GDRQTGKT) contributes to the ATP binding site.

Belongs to the ATPase alpha/beta chains family. In terms of assembly, F-type ATPases have 2 components, CF(1) - the catalytic core - and CF(0) - the membrane proton channel. CF(1) has five subunits: alpha(3), beta(3), gamma(1), delta(1), epsilon(1). CF(0) has four main subunits: a, b, b' and c.

The protein resides in the plastid. It localises to the chloroplast thylakoid membrane. The enzyme catalyses ATP + H2O + 4 H(+)(in) = ADP + phosphate + 5 H(+)(out). Produces ATP from ADP in the presence of a proton gradient across the membrane. The alpha chain is a regulatory subunit. The protein is ATP synthase subunit alpha, chloroplastic of Populus alba (White poplar).